A 517-amino-acid polypeptide reads, in one-letter code: Pentatricopeptide repeat-containing protein At1g13040, mitochondrial (517 aa).

Residues 1 to 57 constitute a mitochondrion transit peptide; it reads MHQTLGAVRLAYRSRIANLVKSGMIDNAVQVFDEMRHSSYRVFSFDYNRFIGVLVRE. PPR repeat units lie at residues 8–42, 43–77, 78–112, 113–147, 148–182, 183–218, 219–253, 254–288, 289–320, 324–358, 359–393, 394–428, 429–463, and 464–498; these read VRLAYRSRIANLVKSGMIDNAVQVFDEMRHSSYRV, FSFDYNRFIGVLVRESRFELAEAIYWDMKPMGFSL, IPFTYSRFISGLCKVKKFDLIDALLSDMETLGFIP, DIWAFNVYLDLLCRENKVGFAVQTFFCMVQRGREP, DVVSYTILINGLFRAGKVTDAVEIWNAMIRSGVSP, DNKACAALVVGLCHARKVDLAYEMVAEEIKSARVKL, STVVYNALISGFCKAGRIEKAEALKSYMSKIGCEP, DLVTYNVLLNYYYDNNMLKRAEGVMAEMVRSGIQL, DAYSYNQLLKRHCRVSHPDKCYNFMVKEMEPR, DVVSYSTLIETFCRASNTRKAYRLFEEMRQKGMVM, NVVTYTSLIKAFLREGNSSVAKKLLDQMTELGLSP, DRIFYTTILDHLCKSGNVDKAYGVFNDMIEHEITP, DAISYNSLISGLCRSGRVTEAIKLFEDMKGKECCP, and DELTFKFIIGGLIRGKKLSAAYKVWDQMMDKGFTL.

The protein belongs to the PPR family. P subfamily.

The protein localises to the mitochondrion. The chain is Pentatricopeptide repeat-containing protein At1g13040, mitochondrial from Arabidopsis thaliana (Mouse-ear cress).